The primary structure comprises 198 residues: PEP-dependent dihydroxyacetone kinase 1, ADP-binding subunit DhaL (198 aa).

Residues 6 to 194 (DWALRWLNDF…SALLFHAMLQ (189 aa)) form the DhaL domain. Mg(2+)-binding residues include Asp30, Asp35, and Asp37. Residues 38–41 (HGIN), 79–80 (AS), Gly120, Met129, Arg166, and 179–181 (DPG) contribute to the ADP site.

As to quaternary structure, homodimer. The dihydroxyacetone kinase complex is composed of a homodimer of DhaM, a homodimer of DhaK and the subunit DhaL. Mg(2+) is required as a cofactor.

The protein localises to the cytoplasm. The catalysed reaction is dihydroxyacetone + phosphoenolpyruvate = dihydroxyacetone phosphate + pyruvate. It participates in polyol metabolism; glycerol degradation. In terms of biological role, ADP-binding subunit of the dihydroxyacetone kinase, which is responsible for the phosphoenolpyruvate (PEP)-dependent phosphorylation of dihydroxyacetone. DhaL-ADP is converted to DhaL-ATP via a phosphoryl group transfer from DhaM and transmits it to dihydroxyacetone binds to DhaK. The chain is PEP-dependent dihydroxyacetone kinase 1, ADP-binding subunit DhaL from Listeria innocua serovar 6a (strain ATCC BAA-680 / CLIP 11262).